The following is a 51-amino-acid chain: Large ribosomal subunit protein eL39y (51 aa).

Residues 1–21 (MPSHKSFMIKKKLGKKMRQNR) form a disordered region. A compositionally biased stretch (basic residues) spans 7-19 (FMIKKKLGKKMRQ).

The protein belongs to the eukaryotic ribosomal protein eL39 family.

This is Large ribosomal subunit protein eL39y (RPL39B) from Arabidopsis thaliana (Mouse-ear cress).